The sequence spans 197 residues: Cyclin-dependent kinase inhibitor 1B (197 aa).

Polar residues predominate over residues 1–11 (MSNVRVSNGSP). Positions 1–34 (MSNVRVSNGSPSLERMDARQAEHPKPSACRNLFG) are disordered. Residue Ser-10 is modified to Phosphoserine; by UHMK1. Residues 14–25 (ERMDARQAEHPK) are compositionally biased toward basic and acidic residues. Positions 51-91 (DMEEASQRKWNFDFQNHKPLEGRYEWQEVERGSLPEFYYRP) are interaction with CDK2. Tyr-74 carries the phosphotyrosine; by SRC modification. Residues 86 to 197 (EFYYRPPRPP…PKKPGLRRQT (112 aa)) form a disordered region. Tyr-88 is subject to Phosphotyrosine; by ABL, LYN, SRC and JAK2. A Phosphotyrosine modification is found at Tyr-89. The segment covering 104-113 (QESQDVSGSR) has biased composition (polar residues). The short motif at 153-169 (KRPAAEDSSSQNKRANR) is the Nuclear localization signal element. Residue Thr-170 is modified to Phosphothreonine; by CaMK1. Polar residues predominate over residues 175–186 (SDGSPNAGTVEQ). Position 187 is a phosphothreonine; by PKB/AKT1, CDK1 and CDK2 (Thr-187). Thr-197 carries the post-translational modification Phosphothreonine; by CaMK1, PKB/AKT1, RPS6KA1, RPS6KA3 and PIM1.

Belongs to the CDI family. In terms of assembly, forms a ternary complex composed of CCNE1, CDK2 and CDKN1B. Interacts directly with CCNE1; the interaction is inhibited by CDK2-dependent phosphorylation on Thr-187. Interacts with COPS5, subunit of the COP9 signalosome complex; the interaction leads to CDKN1B degradation. Interacts with NUP50; the interaction leads to nuclear import and degradation of phosphorylated CDKN1B. Interacts with CCND1 and SNX6. Interacts (Thr-197-phosphorylated form) with 14-3-3 proteins, binds strongly YWHAQ, weakly YWHAE and YWHAH, but not YWHAB nor YWHAZ; the interaction with YWHAQ results in translocation to the cytoplasm. Interacts with AKT1 and LYN; the interactions lead to cytoplasmic mislocation, phosphorylation of CDKN1B and inhibition of cell cycle arrest. Forms a ternary complex with CCNA2 and CDK2; CDKN1B inhibits the kinase activity of CDK2 through conformational rearrangements. Interacts (unphosphorylated form) with CDK2. Forms a complex with CDK2 and SPDYA, but does not directly interact with SPDYA. Forms a ternary complex composed of cyclin D, CDK4 and CDKN1B. Interacts (phosphorylated on Tyr-88 and Tyr-89) with CDK4; the interaction is required for cyclin D and CDK4 complex assembly, induces nuclear translocation and activates the CDK4 kinase activity. Interacts with GRB2. Interacts with PIM1. Identified in a complex with SKP1, SKP2 and CKS1B. Interacts with UHMK1; the interaction leads to cytoplasmic mislocation, phosphorylation of CDKN1B and inhibition of cell cycle arrest. Also interacts with CDK1. Dephosphorylated on Thr-187 by PPM1H, leading to CDKN1B stability. Post-translationally, phosphorylated; phosphorylation occurs on serine, threonine and tyrosine residues. Phosphorylation on Ser-10 is the major site of phosphorylation in resting cells, takes place at the G(0)-G(1) phase and leads to protein stability. Phosphorylation on other sites is greatly enhanced by mitogens, growth factors, MYC and in certain cancer cell lines. The phosphorylated form found in the cytoplasm is inactivate. Phosphorylation on Thr-197 is required for interaction with 14-3-3 proteins. Phosphorylation on Thr-187, by CDK1 and CDK2 leads to protein ubiquitination and proteasomal degradation. Tyrosine phosphorylation promotes this process. Phosphorylation by PKB/AKT1 can be suppressed by LY294002, an inhibitor of the catalytic subunit of PI3K. Phosphorylation on Tyr-88 and Tyr-89 has no effect on binding CDK2, but is required for binding CDK4. Dephosphorylated on tyrosine residues by G-CSF. Dephosphorylated on Thr-187 by PPM1H, leading to CDKN1B stability. In terms of processing, ubiquitinated; in the cytoplasm by the KPC complex (composed of RNF123/KPC1 and UBAC1/KPC2) and, in the nucleus, by SCF(SKP2). The latter requires prior phosphorylation on Thr-187. Ubiquitinated; by a TRIM21-containing SCF(SKP2)-like complex; leads to its degradation. Subject to degradation in the lysosome. Interaction with SNX6 promotes lysosomal degradation.

The protein resides in the nucleus. It is found in the cytoplasm. Its subcellular location is the endosome. In terms of biological role, important regulator of cell cycle progression. Inhibits the kinase activity of CDK2 bound to cyclin A, but has little inhibitory activity on CDK2 bound to SPDYA. Involved in G1 arrest. Potent inhibitor of cyclin E- and cyclin A-CDK2 complexes. Forms a complex with cyclin type D-CDK4 complexes and is involved in the assembly, stability, and modulation of CCND1-CDK4 complex activation. Acts either as an inhibitor or an activator of cyclin type D-CDK4 complexes depending on its phosphorylation state and/or stoichometry. This is Cyclin-dependent kinase inhibitor 1B (Cdkn1b) from Mus musculus (Mouse).